A 208-amino-acid polypeptide reads, in one-letter code: Protein-L-isoaspartate O-methyltransferase (208 aa).

Ser59 is a catalytic residue.

It belongs to the methyltransferase superfamily. L-isoaspartyl/D-aspartyl protein methyltransferase family.

It localises to the cytoplasm. The enzyme catalyses [protein]-L-isoaspartate + S-adenosyl-L-methionine = [protein]-L-isoaspartate alpha-methyl ester + S-adenosyl-L-homocysteine. Its function is as follows. Catalyzes the methyl esterification of L-isoaspartyl residues in peptides and proteins that result from spontaneous decomposition of normal L-aspartyl and L-asparaginyl residues. It plays a role in the repair and/or degradation of damaged proteins. The protein is Protein-L-isoaspartate O-methyltransferase of Citrobacter koseri (strain ATCC BAA-895 / CDC 4225-83 / SGSC4696).